A 1847-amino-acid polypeptide reads, in one-letter code: MVIIMEKPWVEKYRPKTLDDIVGQDEIVKRLKKYVEKKSMPHLLFSGPPGVGKCLTGDTKVIVNGEIREIGEVIEEISNGKFGVTLTNNLKVLGIDEDGKIREFDVQYVYKDKTNTLIKIKTKMGRELKVTTYHPLLINHKNGEIKWEKAENLKVGDKLATPRYILFNESDYNEELAEWLGYFIGDGHADKESNKITFTNGDEKLRKRFAELTEKLFKDAKIKERIHKDRTPDIYVNSKEAVEFIDKLGLRGKKADKVRIPKEIMRSDALRAFLRAYFDCDGGIEKHSIVLSTASKEMAEDLVYALLRFGIIAKLREKVNKNNNKVYYHIVISNSSNLRTFLDNIGFSQERKLKKLLEIIKDENPNLDVITIDKEKIRYIRDRLKVKLTRDIEKDNWSYNKCRKITQELLKEIYYRLEELKEIEKALEENILIDWDEVAERRKEIAEKTGIRSDRILEYIRGKRKPSLKNYIKIANTLGKNIEKIIDAMRIFAKKYSSYAEIGKMLNMWNSSIKIYLESNTQEIEKLEEIRKTELKLVKEILNDEKLIDSIGYVLFLASNEIYWDEIVEIEQLNGEFTIYDLHVPRYHNFIGGNLPTILHNTTAALCLARDLFGENWRDNFLELNASVSKDTPILVKIDGKVKRTTFEELDKIYFETNDENEMYKKVDNLEVLTVDENFRVRWRKVSTIIRHKVDKILRIKFEGGYIELTGNHSIMMLDENGLVAKKASDIKVGDCFLSFVANIEGEKDRLDLKEFEPKDITSRVKIINDFDIDEDTAWMLGLYVAEGAVGFKGKTSGQVIYTLGSHEHDLINKLNDIVDKKGFSKYENFTGSGFDRKRLSAKQIRILNTQLARFVEENFYDGNGRRARNKRIPDIIFELKENLRVEFLKGLADGDSSGNWREVVRISSKSDNLLIDTVWLARISGIESSIFENEARLIWKGGMKWKKSNLLPAEPIIKMIKKLENKINGNWRYILRHQLYEGKKRVSKDKIKQILEMVNVEKLSDKEKEVYDLLKKLSKTELYALVVKEIEIIDYNDFVYDVSVPNNEMFFAGNVPILLHNSDERGIDVIRTKVKDFARTKPIGDVPFKIIFLDESDALTADAQNALRRTMEKYSDVCRFILSCLTGDAKITLPDEREIKIEDFIKMFEERKLKHVLNRNGEDLVLAGVKFNSKIVNHKVYRLVLESGREIEATGDHKFLTRDGWKEVYELKEDDEVLVYPALEGVGFEVDERRIIGLNEFYEFLTNYEIKLGYKPLGKAKSYKELITRDKEKILSRVLELSDKYSKSEIRRKIEEEFGIKISLTTIKNLINGKIDGFALKYVRKIKELGWDEITYDDEKAGIFARLLGFIIGDGHLSKSKEGRILITATINELEGIKKDLEKLGIKASNIIEKDIEHKLDGREIKGKTSFIYINNKAFYLLLNFWGVEIGNKTINGYNIPKWIKYGNKFVKREFLRGLFGADGTKPYIKKYNINGIKLGIRVENISKDKTLEFFEEVKKMLEEFEVESYIKVSKIDNKNLTELIVKANNKNYLKYLSRISYAYEKDNFARLVGEYLRIKEAYKDIILKEIAENALKEADGEKSLRELARKYNVPVDFIINQLKGKDIGLPRNFMTFEEFLKEKVVDGKYVSERIIKKECIGYRDVYDITCHKDPSFIANGFVSHNCNYPSKIIPPIQSRCAVFRFSPLKKEDIAKKLKEIAEKEGLNLTESGLEAIIYVSEGDMRKAINVLQTAAALSDVIDDEIVYKVSSRARPEEVKKMMELALDGKFMEARDLLYKLMVEWGMSGEDILNQMFREINSLDIDERKKVELADAIGETDFRIVEGANERIQLSALLAKMALMGR.

DOD-type homing endonuclease domains follow at residues 179–311, 780–927, and 1348–1508; these read WLGY…RFGI, MLGL…ISGI, and LLGF…EFEV.

It belongs to the activator 1 small subunits family. RfcS subfamily. In terms of assembly, heteromultimer composed of small subunits (RfcS) and large subunits (RfcL). Post-translationally, this protein undergoes a protein self splicing that involves a post-translational excision of the intervening region (intein) followed by peptide ligation.

Functionally, part of the RFC clamp loader complex which loads the PCNA sliding clamp onto DNA. This is Replication factor C small subunit (rfcS) from Methanocaldococcus jannaschii (strain ATCC 43067 / DSM 2661 / JAL-1 / JCM 10045 / NBRC 100440) (Methanococcus jannaschii).